The primary structure comprises 640 residues: Threonine--tRNA ligase (640 aa).

The region spanning 1-61 is the TGS domain; sequence MPTITLPDGS…ENDASLQIIT (61 aa). A catalytic region spans residues 242–533; the sequence is DHRKIGKRLG…LIEHYEGAFP (292 aa). Zn(2+) is bound by residues C333, H384, and H510.

It belongs to the class-II aminoacyl-tRNA synthetase family. Homodimer. The cofactor is Zn(2+).

Its subcellular location is the cytoplasm. The catalysed reaction is tRNA(Thr) + L-threonine + ATP = L-threonyl-tRNA(Thr) + AMP + diphosphate + H(+). Catalyzes the attachment of threonine to tRNA(Thr) in a two-step reaction: L-threonine is first activated by ATP to form Thr-AMP and then transferred to the acceptor end of tRNA(Thr). Also edits incorrectly charged L-seryl-tRNA(Thr). The chain is Threonine--tRNA ligase from Pseudomonas savastanoi pv. phaseolicola (strain 1448A / Race 6) (Pseudomonas syringae pv. phaseolicola (strain 1448A / Race 6)).